The chain runs to 267 residues: Apolipoprotein A-I (267 aa).

A signal peptide spans methionine 1 to alanine 18. 2 consecutive repeat copies span residues leucine 68 to glycine 89 and proline 90 to serine 111. Residues leucine 68–glutamine 267 form a 10 X approximate tandem repeats region. Methionine sulfoxide is present on methionine 110. A 3; half-length repeat occupies lysine 112–glutamine 122. A run of 5 repeats spans residues proline 123–glutamate 144, proline 145–serine 166, proline 167–alanine 188, proline 189–glycine 210, and alanine 211–lysine 232. Residue methionine 136 is modified to Methionine sulfoxide. One copy of the 9; half-length repeat lies at proline 233–leucine 243. Repeat unit 10 spans residues proline 244–glutamine 267.

Belongs to the apolipoprotein A1/A4/E family. As to quaternary structure, homodimer. Interacts with APOA1BP and CLU. Component of a sperm activating protein complex (SPAP), consisting of APOA1, an immunoglobulin heavy chain, an immunoglobulin light chain and albumin. Interacts with NDRG1. Interacts with SCGB3A2. Interacts with NAXE and YJEFN3. Post-translationally, glycosylated. In terms of processing, palmitoylated. Phosphorylation sites are present in the extracellular medium. As to expression, major protein of plasma HDL, also found in chylomicrons.

Its subcellular location is the secreted. Participates in the reverse transport of cholesterol from tissues to the liver for excretion by promoting cholesterol efflux from tissues and by acting as a cofactor for the lecithin cholesterol acyltransferase (LCAT). As part of the SPAP complex, activates spermatozoa motility. The chain is Apolipoprotein A-I (APOA1) from Pan paniscus (Pygmy chimpanzee).